The chain runs to 304 residues: Recombination-associated protein RdgC (304 aa).

It belongs to the RdgC family.

It is found in the cytoplasm. The protein localises to the nucleoid. Its function is as follows. May be involved in recombination. This Paraburkholderia phymatum (strain DSM 17167 / CIP 108236 / LMG 21445 / STM815) (Burkholderia phymatum) protein is Recombination-associated protein RdgC.